The following is a 333-amino-acid chain: Threonine-phosphate decarboxylase (333 aa).

Residue K199 is modified to N6-(pyridoxal phosphate)lysine.

It belongs to the class-I pyridoxal-phosphate-dependent aminotransferase family. Homodimer. Requires pyridoxal 5'-phosphate as cofactor.

It is found in the cytoplasm. The enzyme catalyses O-phospho-L-threonine + H(+) = (R)-1-aminopropan-2-yl phosphate + CO2. The protein operates within cofactor biosynthesis; adenosylcobalamin biosynthesis. Its function is as follows. Decarboxylates L-threonine-O-3-phosphate to yield (R)-1-amino-2-propanol O-2-phosphate, the precursor for the linkage between the nucleotide loop and the corrin ring in cobalamin. The sequence is that of Threonine-phosphate decarboxylase (cobC) from Sinorhizobium sp.